The sequence spans 114 residues: Small ribosomal subunit protein uS17 (114 aa).

Belongs to the universal ribosomal protein uS17 family. Part of the 30S ribosomal subunit.

One of the primary rRNA binding proteins, it binds specifically to the 5'-end of 16S ribosomal RNA. The chain is Small ribosomal subunit protein uS17 from Saccharolobus solfataricus (strain ATCC 35092 / DSM 1617 / JCM 11322 / P2) (Sulfolobus solfataricus).